The following is a 35-amino-acid chain: Protein YbgU (35 aa).

This chain is Protein YbgU, found in Escherichia coli (strain K12).